The chain runs to 88 residues: MANSAQARKRARQAVVARAHNGSLRSRLRTAIKAVQKAVVGGDKAAAQATFRTSMSTIDSIADKKIIHKNKAARHKSRLSAAIKAMTA.

This sequence belongs to the bacterial ribosomal protein bS20 family.

Functionally, binds directly to 16S ribosomal RNA. This Aromatoleum aromaticum (strain DSM 19018 / LMG 30748 / EbN1) (Azoarcus sp. (strain EbN1)) protein is Small ribosomal subunit protein bS20.